The primary structure comprises 258 residues: 5'-nucleotidase SurE (258 aa).

A divalent metal cation is bound by residues aspartate 9, aspartate 10, serine 42, and asparagine 96.

It belongs to the SurE nucleotidase family. Requires a divalent metal cation as cofactor.

The protein resides in the cytoplasm. It catalyses the reaction a ribonucleoside 5'-phosphate + H2O = a ribonucleoside + phosphate. In terms of biological role, nucleotidase that shows phosphatase activity on nucleoside 5'-monophosphates. The protein is 5'-nucleotidase SurE of Campylobacter jejuni subsp. doylei (strain ATCC BAA-1458 / RM4099 / 269.97).